The chain runs to 459 residues: uncharacterized protein (459 aa).

This is an uncharacterized protein from Orgyia pseudotsugata (Douglas-fir tussock moth).